The primary structure comprises 331 residues: Geranylgeranyl transferase type-2 subunit beta (331 aa).

N-acetylglycine is present on Gly2. A Phosphothreonine modification is found at Thr3. PFTB repeat units follow at residues 20–61 (LEKH…DLMG), 68–109 (REEI…TLYD), 116–157 (VNKV…ALLG), 164–205 (VEKA…AITS), 212–253 (SDLL…KIIG), and 260–302 (REKL…SLLG). 190 to 192 (HAG) provides a ligand contact to geranylgeranyl diphosphate. Residues Asp238 and Cys240 each coordinate Zn(2+). 241–244 (YSWW) lines the geranylgeranyl diphosphate pocket. His290 provides a ligand contact to Zn(2+).

Belongs to the protein prenyltransferase subunit beta family. Heterotrimer composed of RABGGTA, RABGGTB and CHM; within this trimer, RABGGTA and RABGGTB form the catalytic component B, while CHM (component A) mediates peptide substrate binding. The Rab GGTase dimer (RGGT) interacts with CHM (component A) prior to Rab protein binding; the association is stabilized by geranylgeranyl pyrophosphate (GGpp). The CHM:RGGT:Rab complex is destabilized by GGpp. Interaction of RABGGTB with prenylated PTP4A2 precludes its association with RABGGTA and inhibits enzyme activity. Interacts with CHODL. Interacts with non-phosphorylated form of RAB8A; phosphorylation of RAB8A at 'Thr-72' disrupts this interaction. The cofactor is Zn(2+).

It catalyses the reaction geranylgeranyl diphosphate + L-cysteinyl-[protein] = S-geranylgeranyl-L-cysteinyl-[protein] + diphosphate. With respect to regulation, the enzymatic reaction requires the aid of a Rab escort protein (also called component A). In terms of biological role, catalyzes the transfer of a geranylgeranyl moiety from geranylgeranyl diphosphate to both cysteines of Rab proteins with the C-terminal sequence -XXCC, -XCXC and -CCXX, such as RAB1A, RAB3A, RAB5A and RAB7A. The polypeptide is Geranylgeranyl transferase type-2 subunit beta (RABGGTB) (Homo sapiens (Human)).